A 245-amino-acid chain; its full sequence is Probable 2-phosphosulfolactate phosphatase (245 aa).

The protein belongs to the ComB family. Requires Mg(2+) as cofactor.

The enzyme catalyses (2R)-O-phospho-3-sulfolactate + H2O = (2R)-3-sulfolactate + phosphate. The polypeptide is Probable 2-phosphosulfolactate phosphatase (Synechococcus sp. (strain RCC307)).